The following is a 102-amino-acid chain: MAAQKIRIRLKAFDYRLIDQSALEIVETAKRTGAVVKGPVPLPTRIERFDILRSPHVNKTSRDQFEIRTHQRLMDIVDPTDKTVDALMKLDLPAGVDVEIKL.

The protein belongs to the universal ribosomal protein uS10 family. Part of the 30S ribosomal subunit.

Involved in the binding of tRNA to the ribosomes. The protein is Small ribosomal subunit protein uS10 of Methylobacillus flagellatus (strain ATCC 51484 / DSM 6875 / VKM B-1610 / KT).